Consider the following 196-residue polypeptide: MSKAAGKLKSLKKTVERVTHTSKLKTNIPAGMAAAGPPLGPMLGQRAINIAAFCKDFNAKTAEMKEGVPLPCRISVNSDRSYDLAIHHPPATFFLKQAAGIQRGTMTPGKEVAGMITLKHLYEIAAIKIQDPPNVLLTMQQMCEMLISIARTCGIKVVREIDPAAYGEFLEERKLIVEQQRRELQEKREAKMLRTG.

Belongs to the universal ribosomal protein uL11 family. Component of the mitochondrial ribosome large subunit (39S) which comprises a 16S rRNA and about 50 distinct proteins.

The protein resides in the mitochondrion. The chain is Large ribosomal subunit protein uL11m (mRpL11) from Drosophila melanogaster (Fruit fly).